We begin with the raw amino-acid sequence, 181 residues long: Endoribonuclease YbeY (181 aa).

Residues H115, H119, and H125 each coordinate Zn(2+).

It belongs to the endoribonuclease YbeY family. It depends on Zn(2+) as a cofactor.

Its subcellular location is the cytoplasm. Its function is as follows. Single strand-specific metallo-endoribonuclease involved in late-stage 70S ribosome quality control and in maturation of the 3' terminus of the 16S rRNA. The protein is Endoribonuclease YbeY of Bifidobacterium animalis subsp. lactis (strain AD011).